A 461-amino-acid chain; its full sequence is Phosphoglycerate kinase, chloroplastic (461 aa).

Residues 1–60 constitute a chloroplast transit peptide; it reads MALSMKMRANARVSGRRVAAVAPRVVPFSSASSSVLRSGFALRCLWTSAAWAALASVVEA. (2R)-3-phosphoglycerate contacts are provided by Ala82, Asp83, Asn85, Arg100, Ser122, His123, Gly125, Arg126, Arg182, His214, and Arg215. ADP is bound at residue Gly260. Gly260 is a CDP binding site. 2 residues coordinate AMP: Lys262 and Lys266. Lys266 is an ATP binding site. Position 284 (Gly284) interacts with ADP. Residue Gly284 coordinates CDP. AMP is bound by residues Gly285 and Gly357. Positions 285 and 357 each coordinate ATP. Positions 382 and 387 each coordinate CDP. Position 387 (Phe387) interacts with ADP. An AMP-binding site is contributed by Glu388. Positions 388, 419, and 420 each coordinate ATP. Asp419 lines the Mg(2+) pocket.

Belongs to the phosphoglycerate kinase family. In terms of assembly, monomer. It depends on Mg(2+) as a cofactor.

The protein localises to the plastid. Its subcellular location is the chloroplast. It carries out the reaction (2R)-3-phosphoglycerate + ATP = (2R)-3-phospho-glyceroyl phosphate + ADP. It functions in the pathway carbohydrate biosynthesis; Calvin cycle. The polypeptide is Phosphoglycerate kinase, chloroplastic (Chlamydomonas reinhardtii (Chlamydomonas smithii)).